The following is a 187-amino-acid chain: Resolvase OPG149 (187 aa).

Belongs to the RuvC family. Poxviruses-type subfamily. Mg(2+) serves as cofactor.

In terms of biological role, plays a role in DNA replication by cleaving viral DNA concatamers to yield unit-length viral genomes. The concatamer junctions contain inverted repeat sequences that can be extruded as cruciforms, yielding Holliday junctions that A22 protein cleaves. This Variola virus (isolate Human/India/Ind3/1967) (VARV) protein is Resolvase OPG149 (OPG149).